The primary structure comprises 118 residues: uncharacterized protein (118 aa).

The HTH hxlR-type domain maps to 6-104; sequence CGFEVTKEVI…WGGYYAEQEY (99 aa).

This is an uncharacterized protein from Bacillus subtilis (strain 168).